The following is a 379-amino-acid chain: Histidinol-phosphate aminotransferase (379 aa).

Lys-231 bears the N6-(pyridoxal phosphate)lysine mark.

This sequence belongs to the class-II pyridoxal-phosphate-dependent aminotransferase family. Histidinol-phosphate aminotransferase subfamily. In terms of assembly, homodimer. Pyridoxal 5'-phosphate serves as cofactor.

The enzyme catalyses L-histidinol phosphate + 2-oxoglutarate = 3-(imidazol-4-yl)-2-oxopropyl phosphate + L-glutamate. The protein operates within amino-acid biosynthesis; L-histidine biosynthesis; L-histidine from 5-phospho-alpha-D-ribose 1-diphosphate: step 7/9. The chain is Histidinol-phosphate aminotransferase from Mycolicibacterium smegmatis (strain ATCC 700084 / mc(2)155) (Mycobacterium smegmatis).